The following is a 231-amino-acid chain: 7-cyano-7-deazaguanine synthase (231 aa).

8–18 serves as a coordination point for ATP; that stretch reads FSGGQDSTTCL. Zn(2+)-binding residues include Cys-188, Cys-197, Cys-200, and Cys-203.

Belongs to the QueC family. Zn(2+) is required as a cofactor.

It catalyses the reaction 7-carboxy-7-deazaguanine + NH4(+) + ATP = 7-cyano-7-deazaguanine + ADP + phosphate + H2O + H(+). It functions in the pathway purine metabolism; 7-cyano-7-deazaguanine biosynthesis. Catalyzes the ATP-dependent conversion of 7-carboxy-7-deazaguanine (CDG) to 7-cyano-7-deazaguanine (preQ(0)). The polypeptide is 7-cyano-7-deazaguanine synthase (Enterobacter sp. (strain 638)).